A 329-amino-acid polypeptide reads, in one-letter code: Two pore potassium channel protein sup-9 (329 aa).

The Cytoplasmic portion of the chain corresponds to M1 to T8. Residues L9–L29 traverse the membrane as a helical segment. N-linked (GlcNAc...) asparagine glycosylation occurs at N53. The pore-forming intramembrane region spans F80–T100. The Selectivity filter signature appears at T93–H98. Residues V108 to I128 traverse the membrane as a helical segment. Topologically, residues G129–D157 are cytoplasmic. A helical transmembrane segment spans residues L158–S178. N182 is a glycosylation site (N-linked (GlcNAc...) asparagine). The segment at residues F186 to A206 is an intramembrane region (pore-forming). The Selectivity filter motif lies at T198–D203. A helical membrane pass occupies residues V220–L240. At L241 to Y329 the chain is on the cytoplasmic side. A may be important for regulation by and/or interaction with sup-10 region spans residues S289 to Y296. Positions H307 to Y329 are disordered.

This sequence belongs to the two pore domain potassium channel (TC 1.A.1.8) family. As to quaternary structure, may form a complex with the regulatory subunits unc-93 and sup-10. In terms of tissue distribution, low levels along surface of body-wall muscle cells, in vulval and intestinal muscles and, more weakly, in anal depressor and sphincter muscles. Also expressed in a subset of head neurons.

It localises to the membrane. Potassium channel involved in coordination of muscle contraction. Activity is regulated by sup-18. This is Two pore potassium channel protein sup-9 from Caenorhabditis elegans.